The chain runs to 470 residues: Fumarate reductase 1 (470 aa).

6–20 (VVVIGTGLAGLAAAN) contributes to the FAD binding site. The residue at position 66 (serine 66) is a Phosphoserine. Catalysis depends on residues histidine 249 and arginine 272.

This sequence belongs to the FAD-dependent oxidoreductase 2 family. FRD/SDH subfamily. It depends on FAD as a cofactor. The N-terminus is blocked.

Its subcellular location is the cytoplasm. The enzyme catalyses succinate + NAD(+) = fumarate + NADH + H(+). Functionally, irreversibly catalyzes the reduction of fumarate to succinate. Together with the second isozyme of soluble fumarate reductase (OSM1), essential for anaerobic growth. Involved in maintaining redox balance. Reduction of fumarate is the main source of succinate during fermentation, and under anaerobic conditions, the formation of succinate is strictly required for the reoxidation of FADH(2). This chain is Fumarate reductase 1 (FRD1), found in Saccharomyces cerevisiae (strain ATCC 204508 / S288c) (Baker's yeast).